A 677-amino-acid chain; its full sequence is MDRPDEGPPAKTPRLSSSEPRQRDLPPPPPPPLQRLPLPPPQQRPRPQEETEAAQVLADMRGVGPTLPPPLPYVILEEGGIRAYFTLSAESPGWDHAMESGFGEAPSTGIMETLPSSEISGGSLAIDFQVAEPSSLGEKALETCSLGGWGPQMLVGPKRKEEAIIIVEDEDEDDKESVRRRQRRRRRRRKQRKAKESRERSAQRMESILQALESIQMDLEAVNIKAGKAFLRLKRKFIQMRRPFLERRDLIIQHIPGFWVKAFLNHPRISILINQRDRDIFRYLTNLQVQDLRHISMGYKMKLYFQTNPYFTNMVIVKEFQRNRSGRLVSHSTPIRWHRGQEPQAYNRRSHDTRESFFNWFSNHSLPEADRIAEIIKNDLWVNPVRYYMRRGGYRSSRKKQHGKERAKNQYEMVIMEDAHDHYAIEDILSDISEIDEITDNETIHDIKISDFMETTDYFETTDNEVTDANENLCDSENPDHSEGYNTKITDNKGSVAANPDDNSDDPEEKNTYDSEDSNSEKADGDNTTLRDNQQVTNIQDSSDSDNGDEGSDDEDDDGNEGDNEGSDDDDDDNEGSDDDDRDIRYYKNGPEVFDKALDNRTNQNDYEEEVELISEDSVEEEEETSEEASQLSEDSYEDERIYGEERSEVNSEDSDIQEVLPVPKAWASLGKKGKIG.

Residues 1 to 54 are disordered; it reads MDRPDEGPPAKTPRLSSSEPRQRDLPPPPPPPLQRLPLPPPQQRPRPQEETEAA. Lys-11 is covalently cross-linked (Glycyl lysine isopeptide (Lys-Gly) (interchain with G-Cter in SUMO2)). Position 18 is a phosphoserine (Ser-18). Pro residues predominate over residues 25-44; that stretch reads LPPPPPPPLQRLPLPPPQQR. Glycyl lysine isopeptide (Lys-Gly) (interchain with G-Cter in SUMO2) cross-links involve residues Lys-158 and Lys-160. The disordered stretch occupies residues 175–202; sequence KESVRRRQRRRRRRRKQRKAKESRERSA. A compositionally biased stretch (basic residues) spans 178–193; sequence VRRRQRRRRRRRKQRK. Thr-333 is subject to Phosphothreonine. The tract at residues 469-658 is disordered; the sequence is ANENLCDSEN…EVNSEDSDIQ (190 aa). The span at 484-493 shows a compositional bias: polar residues; the sequence is GYNTKITDNK. Residues 509–525 show a composition bias toward basic and acidic residues; that stretch reads EKNTYDSEDSNSEKADG. Over residues 526-540 the composition is skewed to polar residues; sequence DNTTLRDNQQVTNIQ. 2 stretches are compositionally biased toward acidic residues: residues 543–581 and 606–627; these read SDSDNGDEGSDDEDDDGNEGDNEGSDDDDDDNEGSDDDD and DYEEEVELISEDSVEEEEETSE. Residues 639-650 are compositionally biased toward basic and acidic residues; it reads DERIYGEERSEV. A phosphoserine mark is found at Ser-648, Ser-652, and Ser-655.

Belongs to the nucleosome assembly protein (NAP) family. In terms of assembly, interacts with histones. Interacts with CASK. Part of a complex containing CASK, TBR1 and TSPYL2. Post-translationally, phosphorylation at Thr-333 impairs function on cell proliferation. As to expression, present at high levels in the pituitary gland and at moderate levels in adrenal gland, brain, testis and ovary. In brain, expressed both in mature neurons and progenitor cells (at protein level).

The protein localises to the nucleus. Its subcellular location is the cytoplasm. Its function is as follows. Part of the CASK/TBR1/TSPYL2 transcriptional complex which modulates gene expression in response to neuronal synaptic activity, probably by facilitating nucleosome assembly. May inhibit cell proliferation by inducing p53-dependent CDKN1A expression. The protein is Testis-specific Y-encoded-like protein 2 (Tspyl2) of Mus musculus (Mouse).